Reading from the N-terminus, the 352-residue chain is MGSSNKKKKEKKKDFNKAKLKVGKAKAKAANFTDTSFKSKSIVVNQHTLAALDGVDLVGLFKQHLNQAINSKSDKLRQEALVQLTKDLSSKPIFNPVGVPNLLTKLLPLITDSVANVRTNFLKLLRALPPSDVAPHVEKILMYIRGGMTHLSTEIRSDTLSVLDWLIDVCPDETVSCPGGWLKTMNSFSSMLGWNPSVASTLSVKGWTSATKTSLNKVSKKNGEAQAKQITTLAKFLEAGFRPETPLPYDEQRYWDSIYRMPTTPNPFAYLNLWGAQRDEDGEMYPDRISRQQVFERKWRAAIKTGVMGAKQEGGVIGRAASVLDKVLRTAEEGGKKVVEEQKIEEVEEAEA.

It belongs to the IPI1/TEX10 family. In terms of assembly, component of the RIX1 complex, composed of rrm-9/ipi1, rix1/ipi2 and ipi3 in a 1:2:2 stoichiometry. The complex interacts (via rix1) with mdn1 (via its hexameric AAA ATPase ring) and the pre-60S ribosome particles.

Its subcellular location is the nucleus. Its function is as follows. Component of the RIX1 complex required for processing of ITS2 sequences from 35S pre-rRNA. This Neurospora crassa (strain ATCC 24698 / 74-OR23-1A / CBS 708.71 / DSM 1257 / FGSC 987) protein is Pre-rRNA-processing protein ipi1 (rrm-9).